A 120-amino-acid chain; its full sequence is Large ribosomal subunit protein uL18 (120 aa).

It belongs to the universal ribosomal protein uL18 family. Part of the 50S ribosomal subunit; part of the 5S rRNA/L5/L18/L25 subcomplex. Contacts the 5S and 23S rRNAs.

This is one of the proteins that bind and probably mediate the attachment of the 5S RNA into the large ribosomal subunit, where it forms part of the central protuberance. This Bacillus cereus (strain ATCC 10987 / NRS 248) protein is Large ribosomal subunit protein uL18.